The chain runs to 174 residues: Adenine phosphoribosyltransferase (174 aa).

Belongs to the purine/pyrimidine phosphoribosyltransferase family. As to quaternary structure, homodimer.

The protein resides in the cytoplasm. It catalyses the reaction AMP + diphosphate = 5-phospho-alpha-D-ribose 1-diphosphate + adenine. Its pathway is purine metabolism; AMP biosynthesis via salvage pathway; AMP from adenine: step 1/1. Catalyzes a salvage reaction resulting in the formation of AMP, that is energically less costly than de novo synthesis. The sequence is that of Adenine phosphoribosyltransferase from Nitrosomonas europaea (strain ATCC 19718 / CIP 103999 / KCTC 2705 / NBRC 14298).